Here is a 361-residue protein sequence, read N- to C-terminus: Nicotinate-nucleotide--dimethylbenzimidazole phosphoribosyltransferase (361 aa).

The active-site Proton acceptor is Glu320.

It belongs to the CobT family. In terms of assembly, homodimer.

It carries out the reaction 5,6-dimethylbenzimidazole + nicotinate beta-D-ribonucleotide = alpha-ribazole 5'-phosphate + nicotinate + H(+). It functions in the pathway nucleoside biosynthesis; alpha-ribazole biosynthesis; alpha-ribazole from 5,6-dimethylbenzimidazole: step 1/2. Catalyzes the synthesis of alpha-ribazole-5'-phosphate from nicotinate mononucleotide (NAMN) and 5,6-dimethylbenzimidazole (DMB). The polypeptide is Nicotinate-nucleotide--dimethylbenzimidazole phosphoribosyltransferase (Shigella boydii serotype 18 (strain CDC 3083-94 / BS512)).